Reading from the N-terminus, the 540-residue chain is Coiled-coil domain-containing protein 116 (540 aa).

Positions 79–102 form a coiled coil; it reads QVLDSLQTVVEQATECVATMKTEA. The tract at residues 347–400 is disordered; it reads PGNSDLQPSSKASLPTDREARGETCYSPTSASSPKTSHRKSKDRRGSPSNAVQM. Composition is skewed to polar residues over residues 350-359 and 372-381; these read SDLQPSSKAS and YSPTSASSPK. Serine 393 carries the post-translational modification Phosphoserine.

It is found in the cytoplasm. Its subcellular location is the cytoskeleton. The protein localises to the microtubule organizing center. It localises to the centrosome. In Rattus norvegicus (Rat), this protein is Coiled-coil domain-containing protein 116 (Ccdc116).